The chain runs to 322 residues: Pantothenate kinase (322 aa).

101-108 contacts ATP; that stretch reads GSVAVGKS.

It belongs to the prokaryotic pantothenate kinase family.

The protein localises to the cytoplasm. It carries out the reaction (R)-pantothenate + ATP = (R)-4'-phosphopantothenate + ADP + H(+). It functions in the pathway cofactor biosynthesis; coenzyme A biosynthesis; CoA from (R)-pantothenate: step 1/5. The chain is Pantothenate kinase from Psychromonas ingrahamii (strain DSM 17664 / CCUG 51855 / 37).